A 595-amino-acid polypeptide reads, in one-letter code: O-phosphoseryl-tRNA(Sec) selenium transferase (595 aa).

Arg75 provides a ligand contact to pyridoxal 5'-phosphate. Residues 96 to 106 are phosphate loop (P-loop); sequence GRSGDLFSEQP. Arg97, Ser98, and Gln105 together coordinate substrate. The segment covering 174–187 has biased composition (polar residues); sequence RTVTKDSTSATSAA. Disordered stretches follow at residues 174–208 and 257–278; these read RTVTKDSTSATSAAPVQEPPMSEADRDRHDRTSLP and STNRDSLDRGQDSIGSPSTPTS. Residues 196–205 are compositionally biased toward basic and acidic residues; that stretch reads EADRDRHDRT. Arg358 contacts tRNA. At Lys371 the chain carries N6-(pyridoxal phosphate)lysine. A substrate-binding site is contributed by Arg400.

This sequence belongs to the SepSecS family. In terms of assembly, homotetramer composed of two homodimers. Requires pyridoxal 5'-phosphate as cofactor.

It localises to the cytoplasm. The enzyme catalyses O-phospho-L-seryl-tRNA(Sec) + selenophosphate + H2O = L-selenocysteinyl-tRNA(Sec) + 2 phosphate. The protein operates within aminoacyl-tRNA biosynthesis; selenocysteinyl-tRNA(Sec) biosynthesis; selenocysteinyl-tRNA(Sec) from L-seryl-tRNA(Sec) (archaeal/eukaryal route): step 2/2. Functionally, converts O-phosphoseryl-tRNA(Sec) to selenocysteinyl-tRNA(Sec) required for selenoprotein biosynthesis. In Leishmania donovani, this protein is O-phosphoseryl-tRNA(Sec) selenium transferase.